The chain runs to 506 residues: MSDQNAVETRTDVVLVGAGIMSATLGAILRQVQPDWSITTFERLDAVAAESSDPWNNAGTGHSALCELNYTPQNADGTVDITKAVNVNEQFQVSRQFWAHGVESGVLTQPKEFINPIPHVSFVHGEANAKYLRARYDALAGHPLFAGMEYIDAPDEFTRRLPLMAKGRDFSDPVALNWTQDGTDVDFGALTKQLLGYVGASGGVVHFGHEVTDLTKQSDGSWVVKVTNRRNGVKKVVRAKFVFVGAGGGALHLLQKSGIEEAKGFGGFPVSGAFLRCTNPELIDQHRAKVYGKAAVGAPPMSVPHLDTRVIGNKPGLLFGPYAGWSPKFLKQGRVTDLPSSVKPDNLLSMLGVGVSELGLVKYLISELAMSEAGRIETLREFVPKALGKDWELITAGQRVQVIRRAKGKGGVLEFGTAVVNAADGTIAGLLGASPGASTAVPAMLDVLQRCFPAQYESWKPKLQEMVPSLGVKLSDDTALFSQVWDWTSKVLQLDTSKVEDASVAV.

This sequence belongs to the MQO family. It depends on FAD as a cofactor.

It catalyses the reaction (S)-malate + a quinone = a quinol + oxaloacetate. It functions in the pathway carbohydrate metabolism; tricarboxylic acid cycle; oxaloacetate from (S)-malate (quinone route): step 1/1. In Rhodococcus jostii (strain RHA1), this protein is Probable malate:quinone oxidoreductase.